A 131-amino-acid polypeptide reads, in one-letter code: Small ribosomal subunit protein bS6 (131 aa).

Positions 96–131 (VTAPSPMMKEEKSKSLLAKDEAAAPAPAPATEQATA) are disordered. Positions 103–117 (MKEEKSKSLLAKDEA) are enriched in basic and acidic residues. The span at 118–131 (AAPAPAPATEQATA) shows a compositional bias: low complexity.

The protein belongs to the bacterial ribosomal protein bS6 family.

Functionally, binds together with bS18 to 16S ribosomal RNA. The sequence is that of Small ribosomal subunit protein bS6 from Methylobacillus flagellatus (strain ATCC 51484 / DSM 6875 / VKM B-1610 / KT).